The chain runs to 392 residues: Methylthioribose kinase (392 aa).

ATP-binding positions include asparagine 38, lysine 53, and 107 to 109 (EDL). Substrate is bound at residue aspartate 225. Residue 242–244 (DPE) coordinates ATP. Arginine 332 provides a ligand contact to substrate.

Belongs to the methylthioribose kinase family. As to quaternary structure, homodimer.

It carries out the reaction 5-(methylsulfanyl)-D-ribose + ATP = 5-(methylsulfanyl)-alpha-D-ribose 1-phosphate + ADP + H(+). It participates in amino-acid biosynthesis; L-methionine biosynthesis via salvage pathway; S-methyl-5-thio-alpha-D-ribose 1-phosphate from S-methyl-5'-thioadenosine (hydrolase route): step 2/2. In terms of biological role, catalyzes the phosphorylation of methylthioribose into methylthioribose-1-phosphate. The chain is Methylthioribose kinase from Bacillus mycoides (strain KBAB4) (Bacillus weihenstephanensis).